Here is an 83-residue protein sequence, read N- to C-terminus: Evasin P1124 (83 aa).

The first 28 residues, 1–28 (MAVNVFTILQLAVFAAIVLNVNLHSVSA), serve as a signal peptide directing secretion. 3 disulfide bridges follow: cysteine 48–cysteine 66, cysteine 52–cysteine 68, and cysteine 62–cysteine 79. Asparagine 51 is a glycosylation site (N-linked (GlcNAc...) asparagine).

Its subcellular location is the secreted. Salivary chemokine-binding protein which binds to host chemokines CXCL1, CXCL2, CXCL3, CXCL5, CXCL6, CXCL12 and CXCL13. The protein is Evasin P1124 of Ixodes ricinus (Common tick).